We begin with the raw amino-acid sequence, 103 residues long: Large ribosomal subunit protein bL21 (103 aa).

This sequence belongs to the bacterial ribosomal protein bL21 family. Part of the 50S ribosomal subunit. Contacts protein L20.

In terms of biological role, this protein binds to 23S rRNA in the presence of protein L20. This is Large ribosomal subunit protein bL21 from Vibrio atlanticus (strain LGP32) (Vibrio splendidus (strain Mel32)).